Consider the following 370-residue polypeptide: Peridinin-chlorophyll a-binding protein 1, chloroplastic (370 aa).

A chloroplast-targeting transit peptide spans 1 to 57 (MVRSGKKAVVLAAVAFCATSVVQKSHGFVPSPLRQRAAAAGAAAASAATMFAPAAFA). 2 consecutive repeat copies span residues 58–220 (DEIG…VPSG) and 221–370 (DKIG…AAQR).

In terms of assembly, homotrimer.

The protein localises to the plastid. Its subcellular location is the chloroplast. Water-soluble antenna for capture of solar energy in the blue-green range. Peridinin is an asymmetric carotenoid. This chain is Peridinin-chlorophyll a-binding protein 1, chloroplastic, found in Amphidinium carterae (Dinoflagellate).